Reading from the N-terminus, the 65-residue chain is Photosystem II reaction center protein J (65 aa).

Residues L35–Y55 traverse the membrane as a helical segment.

It belongs to the PsbJ family. PSII is composed of 1 copy each of membrane proteins PsbA, PsbB, PsbC, PsbD, PsbE, PsbF, PsbH, PsbI, PsbJ, PsbK, PsbL, PsbM, PsbT, PsbX, PsbY, Psb30/Ycf12, peripheral proteins PsbO, CyanoQ (PsbQ), PsbU, PsbV and a large number of cofactors. It forms dimeric complexes.

The protein resides in the cellular thylakoid membrane. Its function is as follows. One of the components of the core complex of photosystem II (PSII). PSII is a light-driven water:plastoquinone oxidoreductase that uses light energy to abstract electrons from H(2)O, generating O(2) and a proton gradient subsequently used for ATP formation. It consists of a core antenna complex that captures photons, and an electron transfer chain that converts photonic excitation into a charge separation. The sequence is that of Photosystem II reaction center protein J from Prochlorococcus marinus (strain NATL1A).